Reading from the N-terminus, the 757-residue chain is RNA-directed RNA polymerase catalytic subunit (757 aa).

The disordered stretch occupies residues 50-82 (SERGRWTKNTETGAPQLNPIDGPLPEDNEPSGY). 2 short sequence motifs (nuclear localization signal) span residues 187–195 (RKRRVRDNV) and 203–216 (RTIG…NKRS). The tract at residues 249–256 (RGFVYFVE) is promoter-binding site. A RdRp catalytic domain is found at 286–483 (VRKMMTNSQD…GINMSKKKSY (198 aa)).

The protein belongs to the influenza viruses polymerase PB1 family. Influenza RNA polymerase is composed of three subunits: PB1, PB2 and PA. Interacts (via N-terminus) with PA (via C-terminus). Interacts (via C-terminus) with PB2 (via N-terminus); this interaction is essential for transcription initiation. Interacts (via C-terminus) with human PKP2 (via N-terminus); the interaction competitively inhibits the interaction between the RNA polymerase subunits PB1 and PB2. Phosphorylated by host PRKCA.

It localises to the host nucleus. It is found in the host cytoplasm. It carries out the reaction RNA(n) + a ribonucleoside 5'-triphosphate = RNA(n+1) + diphosphate. Its function is as follows. RNA-dependent RNA polymerase which is responsible for replication and transcription of virus RNA segments. The transcription of viral mRNAs occurs by a unique mechanism called cap-snatching. 5' methylated caps of cellular mRNAs are cleaved after 10-13 nucleotides by PA. In turn, these short capped RNAs are used as primers by PB1 for transcription of viral mRNAs. During virus replication, PB1 initiates RNA synthesis and copy vRNA into complementary RNA (cRNA) which in turn serves as a template for the production of more vRNAs. This is RNA-directed RNA polymerase catalytic subunit from Influenza A virus (strain A/Beijing/11/1956 H1N1).